Here is a 199-residue protein sequence, read N- to C-terminus: Large ribosomal subunit protein bL9 (199 aa).

Residues 169-199 (TGGFTEEYDPNAEPGEIPTELLEGGEEAAEA) form a disordered region.

It belongs to the bacterial ribosomal protein bL9 family.

Its function is as follows. Binds to the 23S rRNA. The protein is Large ribosomal subunit protein bL9 of Novosphingobium aromaticivorans (strain ATCC 700278 / DSM 12444 / CCUG 56034 / CIP 105152 / NBRC 16084 / F199).